A 193-amino-acid polypeptide reads, in one-letter code: MKLLEERILKDGHILGDNILKVDSFLTHQVDFSLMREIGKVFAEKFATTGITKVVTIEASGIAPAVFTAEALNVPMIFAKKAKNITMNEGILTAQVYSFTKQVTSTVSIAEKFLSPEDKVLIIDDFLANGQAAKGLIQIIEQAGATVQAIGIVIEKSFQDGRDLLEKAGYPVLSLARLDCFENGQVVFKEADL.

Xanthine-binding residues include Leu-20 and Thr-27. 128 to 132 (ANGQA) lines the 5-phospho-alpha-D-ribose 1-diphosphate pocket. A xanthine-binding site is contributed by Lys-156.

It belongs to the purine/pyrimidine phosphoribosyltransferase family. Xpt subfamily. Homodimer.

The protein resides in the cytoplasm. It catalyses the reaction XMP + diphosphate = xanthine + 5-phospho-alpha-D-ribose 1-diphosphate. It functions in the pathway purine metabolism; XMP biosynthesis via salvage pathway; XMP from xanthine: step 1/1. Its function is as follows. Converts the preformed base xanthine, a product of nucleic acid breakdown, to xanthosine 5'-monophosphate (XMP), so it can be reused for RNA or DNA synthesis. This chain is Xanthine phosphoribosyltransferase, found in Streptococcus pneumoniae serotype 4 (strain ATCC BAA-334 / TIGR4).